Here is a 434-residue protein sequence, read N- to C-terminus: ATP-dependent protease ATPase subunit HslU (434 aa).

ATP-binding positions include Ile18, 60 to 65 (GVGKTE), Asp247, Glu312, and Arg384.

The protein belongs to the ClpX chaperone family. HslU subfamily. A double ring-shaped homohexamer of HslV is capped on each side by a ring-shaped HslU homohexamer. The assembly of the HslU/HslV complex is dependent on binding of ATP.

Its subcellular location is the cytoplasm. Its function is as follows. ATPase subunit of a proteasome-like degradation complex; this subunit has chaperone activity. The binding of ATP and its subsequent hydrolysis by HslU are essential for unfolding of protein substrates subsequently hydrolyzed by HslV. HslU recognizes the N-terminal part of its protein substrates and unfolds these before they are guided to HslV for hydrolysis. This chain is ATP-dependent protease ATPase subunit HslU, found in Brucella melitensis biotype 1 (strain ATCC 23456 / CCUG 17765 / NCTC 10094 / 16M).